The following is a 381-amino-acid chain: MQLPKFNELYKSLILTPSISSLEKELDISNKPVIDLLAAWFSELGFSINITSVPETNGKFNLVATYGQGDGGLLLAGHTDTVPFDDGLWTKDPFQLTEKDDKWYGLGTIDMKGFFAFVLEACKNIDLTKLDKPLRILATADEETTMAGARAIAAAKSFRPDYAVIGEPTSMVPVFMHKGHMSEAIRITGRSGHSSDPANGINAIEIMHQVTGQLLQLQRKLKEQYACDHFVIPQPTLNFGHVHGGDSPNRICGSCELHIDMRPIPGVNPDELFMLLNQALLPIMKQWPGAVDVYHLHEPIPAYACDTDSALIKLAEKLTGETVIPVNYCTEAPFIHTGCDTIVMGPGSINQAHQPDEYLDLSAIKPTQAIIQKLIEQSCKN.

Residue His-78 participates in Zn(2+) binding. The active site involves Asp-80. Asp-110 lines the Zn(2+) pocket. Residue Glu-142 is part of the active site. 3 residues coordinate Zn(2+): Glu-143, Glu-167, and His-353.

The protein belongs to the peptidase M20A family. ArgE subfamily. In terms of assembly, homodimer. Zn(2+) is required as a cofactor. It depends on Co(2+) as a cofactor. Requires glutathione as cofactor.

The protein localises to the cytoplasm. The enzyme catalyses N(2)-acetyl-L-ornithine + H2O = L-ornithine + acetate. It functions in the pathway amino-acid biosynthesis; L-arginine biosynthesis; L-ornithine from N(2)-acetyl-L-ornithine (linear): step 1/1. Functionally, catalyzes the hydrolysis of the amide bond of N(2)-acetylated L-amino acids. Cleaves the acetyl group from N-acetyl-L-ornithine to form L-ornithine, an intermediate in L-arginine biosynthesis pathway, and a branchpoint in the synthesis of polyamines. In Moritella profunda, this protein is Acetylornithine deacetylase.